A 350-amino-acid chain; its full sequence is Palmitoyltransferase erf2 (350 aa).

Residues 1-86 lie on the Cytoplasmic side of the membrane; sequence MSYEKHSDAK…RLQMSSQYKA (86 aa). Residues 87–107 form a helical membrane-spanning segment; sequence FLISLFALILPGVLFFIFSAF. The Lumenal portion of the chain corresponds to 108 to 112; that stretch reads WLWHH. A helical transmembrane segment spans residues 113–133; sequence VSPAVPITFAYLYALAVVSMF. The Cytoplasmic portion of the chain corresponds to 134–225; sequence KCSTADPGIL…NTCIGRRNYR (92 aa). Residues 182 to 232 enclose the DHHC domain; that stretch reads VYCHTCHLYRPPRASHCHLCDNCVEYLDHHCIWLNTCIGRRNYRYYFIFLL. C212 serves as the catalytic S-palmitoyl cysteine intermediate. The helical transmembrane segment at 226–246 threads the bilayer; that stretch reads YYFIFLLSVVLSALYLTGLGF. The Lumenal segment spans residues 247-270; sequence YTSIGSFHESTDTNFAAHLRRPWA. The helical transmembrane segment at 271–291 threads the bilayer; sequence GVSFFLGIYGALGAILPGILF. At 292–350 the chain is on the cytoplasmic side; the sequence is CYQCYLISVGQNVHEYLRAKSTETEDVHPFHDSIWLNFLVVLCRPKNVSYVRPTRKSYV.

The protein belongs to the DHHC palmitoyltransferase family. ERF2/ZDHHC9 subfamily. Interacts with erf4. Autopalmitoylated.

The protein resides in the endoplasmic reticulum membrane. It localises to the golgi apparatus. It is found in the golgi stack membrane. It catalyses the reaction L-cysteinyl-[protein] + hexadecanoyl-CoA = S-hexadecanoyl-L-cysteinyl-[protein] + CoA. Functionally, the erf2-erf4 complex is a palmitoyltransferase with a major role in driving sexual development. Palmitoylates ras1. Palmitoylates isp3. Palmitoylates rho3. This is Palmitoyltransferase erf2 from Schizosaccharomyces pombe (strain 972 / ATCC 24843) (Fission yeast).